Here is an 81-residue protein sequence, read N- to C-terminus: Short neurotoxin 1 (81 aa).

A signal peptide spans 1-21; the sequence is MKTLLLTLVVVTIVCLDLGYT. 4 disulfides stabilise this stretch: Cys-24–Cys-43, Cys-38–Cys-60, Cys-62–Cys-73, and Cys-74–Cys-79.

This sequence belongs to the three-finger toxin family. Short-chain subfamily. Type I alpha-neurotoxin sub-subfamily. As to expression, expressed by the venom gland.

It localises to the secreted. In terms of biological role, binds to muscle nicotinic acetylcholine receptor (nAChR) and inhibit acetylcholine from binding to the receptor, thereby impairing neuromuscular transmission. The protein is Short neurotoxin 1 of Tropidechis carinatus (Australian rough-scaled snake).